Consider the following 248-residue polypeptide: uncharacterized protein (248 aa).

To M.jannaschii MJ1452.

This is an uncharacterized protein from Methanothermobacter thermautotrophicus (strain ATCC 29096 / DSM 1053 / JCM 10044 / NBRC 100330 / Delta H) (Methanobacterium thermoautotrophicum).